We begin with the raw amino-acid sequence, 361 residues long: Mitogen-activated protein kinase 14 (361 aa).

One can recognise a Protein kinase domain in the interval 25 to 309 (YQNLTPVGSG…AAEALAHSYF (285 aa)). Residues 31–39 (VGSGAYGSV) and Lys54 contribute to the ATP site. Asp151 (proton acceptor) is an active-site residue. Phosphothreonine is present on Thr181. The TXY motif lies at 181-183 (TGY). Residue Tyr183 is modified to Phosphotyrosine.

The protein belongs to the protein kinase superfamily. CMGC Ser/Thr protein kinase family. MAP kinase subfamily. Requires Mg(2+) as cofactor. Post-translationally, dually phosphorylated on Thr-181 and Tyr-183, which activates the enzyme.

It carries out the reaction L-seryl-[protein] + ATP = O-phospho-L-seryl-[protein] + ADP + H(+). It catalyses the reaction L-threonyl-[protein] + ATP = O-phospho-L-threonyl-[protein] + ADP + H(+). Activated by tyrosine and threonine phosphorylation. Functionally, serine/threonine kinase which acts as an essential component of the MAP kinase signal transduction pathway. mapk14a is one of the four p38 MAPKs which play an important role in the cascades of cellular responses evoked by extracellular stimuli such as pro-inflammatory cytokines or physical stress leading to direct activation of transcription factors. Accordingly, p38 MAPKs phosphorylate a broad range of proteins and it has been estimated that they may have approximately 200 to 300 substrates each. Some of the targets are downstream kinases which are activated through phosphorylation and further phosphorylate additional targets. MPK2 is activated by upstream MAPKK/MAPKKK and stimulates MAPKAP kinase 2 to phosphorylate small heat shock proteins. Does not phosphorylate myelin basic protein or MAPKAP kinase 1. This is Mitogen-activated protein kinase 14 (mapk14) from Xenopus laevis (African clawed frog).